The sequence spans 554 residues: Aspartyl/glutamyl-tRNA(Asn/Gln) amidotransferase subunit B (554 aa).

The segment at 491–554 (AEQPTAPPPE…TPVSHQDAHA (64 aa)) is disordered. Residues 502–540 (ESAAETPEAPPAVEDAPPEAPTEAITAEAGSAEAITAAS) are compositionally biased toward low complexity.

It belongs to the GatB/GatE family. GatB subfamily. Heterotrimer of A, B and C subunits.

The enzyme catalyses L-glutamyl-tRNA(Gln) + L-glutamine + ATP + H2O = L-glutaminyl-tRNA(Gln) + L-glutamate + ADP + phosphate + H(+). It carries out the reaction L-aspartyl-tRNA(Asn) + L-glutamine + ATP + H2O = L-asparaginyl-tRNA(Asn) + L-glutamate + ADP + phosphate + 2 H(+). Its function is as follows. Allows the formation of correctly charged Asn-tRNA(Asn) or Gln-tRNA(Gln) through the transamidation of misacylated Asp-tRNA(Asn) or Glu-tRNA(Gln) in organisms which lack either or both of asparaginyl-tRNA or glutaminyl-tRNA synthetases. The reaction takes place in the presence of glutamine and ATP through an activated phospho-Asp-tRNA(Asn) or phospho-Glu-tRNA(Gln). In Gloeobacter violaceus (strain ATCC 29082 / PCC 7421), this protein is Aspartyl/glutamyl-tRNA(Asn/Gln) amidotransferase subunit B.